Consider the following 268-residue polypeptide: Tryptophan synthase alpha chain (268 aa).

Residues Glu49 and Asp60 each act as proton acceptor in the active site.

The protein belongs to the TrpA family. As to quaternary structure, tetramer of two alpha and two beta chains.

The catalysed reaction is (1S,2R)-1-C-(indol-3-yl)glycerol 3-phosphate + L-serine = D-glyceraldehyde 3-phosphate + L-tryptophan + H2O. Its pathway is amino-acid biosynthesis; L-tryptophan biosynthesis; L-tryptophan from chorismate: step 5/5. In terms of biological role, the alpha subunit is responsible for the aldol cleavage of indoleglycerol phosphate to indole and glyceraldehyde 3-phosphate. The protein is Tryptophan synthase alpha chain of Serratia proteamaculans (strain 568).